Consider the following 546-residue polypeptide: Putative serine/threonine-protein kinase L268 (546 aa).

One can recognise a Cyclin N-terminal domain in the interval 1 to 112; that stretch reads MVCFSKYSGI…ILQTLDFHLV (112 aa). Positions 260 to 544 constitute a Protein kinase domain; that stretch reads ITVVKNLGEG…QTLEEFNKFN (285 aa). ATP-binding positions include 266–274 and Lys-287; that span reads LGEGTYGTV. Catalysis depends on Asp-389, which acts as the Proton acceptor.

It belongs to the protein kinase superfamily. Ser/Thr protein kinase family.

The enzyme catalyses L-seryl-[protein] + ATP = O-phospho-L-seryl-[protein] + ADP + H(+). It catalyses the reaction L-threonyl-[protein] + ATP = O-phospho-L-threonyl-[protein] + ADP + H(+). The sequence is that of Putative serine/threonine-protein kinase L268 from Acanthamoeba polyphaga mimivirus (APMV).